Here is a 1587-residue protein sequence, read N- to C-terminus: DNA topoisomerase 2 (1587 aa).

A compositionally biased stretch (acidic residues) spans 1–15 (MSDADPFDMSDDDDN). The disordered stretch occupies residues 1-47 (MSDADPFDMSDDDDNSVLSHTPPKKQKKAPTTKKGGSKPLADVENES). Residues 22-31 (PPKKQKKAPT) show a composition bias toward basic residues. ATP-binding positions include asparagine 126, asparagine 155, 183–185 (SSN), and 196–203 (GRNGFGAK). Interaction with DNA stretches follow at residues 381 to 383 (KKK) and 381 to 386 (KKKNKN). 415–417 (QTK) is a binding site for ATP. Positions 461-485 (MLKKTDGGRRSRMNNPKLTDANKAG) are disordered. Residues 492-606 (CTLILTEGDS…SLLKIPEFLI (115 aa)) form the Toprim domain. Mg(2+) is bound by residues glutamate 498, aspartate 575, and aspartate 577. In terms of domain architecture, Topo IIA-type catalytic spans 743–1190 (IPSVVDGLKP…SKEDIWKRDL (448 aa)). Tyrosine 833 functions as the O-(5'-phospho-DNA)-tyrosine intermediate in the catalytic mechanism. The segment at 1016–1025 (KLSKTMTTTN) is interaction with DNA. Residues 1204–1587 (EARRQRKVAN…PRPRRPRRRS (384 aa)) are disordered. Low complexity predominate over residues 1271–1280 (LSFLGKSSAK). The segment covering 1308–1320 (PKSEPKADPKPKD) has biased composition (basic and acidic residues). The span at 1321–1334 (EDEDIVMEDSDIEE) shows a compositional bias: acidic residues. The span at 1348 to 1364 (VKPESEDGQAKIAEAPK) shows a compositional bias: basic and acidic residues. Positions 1365–1375 (RGRAAAKPKPK) are enriched in basic residues. Acidic residues-rich tracts occupy residues 1379 to 1391 (EDEE…DDFM) and 1419 to 1430 (SDSDSDNGDDLL). Composition is skewed to polar residues over residues 1441–1451 (GSTNGASTSDS) and 1466–1475 (GLKTTASKAS). The span at 1512-1521 (DNEPEDDDDE) shows a compositional bias: acidic residues. Low complexity predominate over residues 1524 to 1542 (KPAAKGKAAAKGKSTAAAA). The segment covering 1558–1568 (PKPPPRLPCPL) has biased composition (pro residues). Residues 1571–1587 (RRTHRSNPRPRRPRRRS) are compositionally biased toward basic residues.

The protein belongs to the type II topoisomerase family. As to quaternary structure, homodimer. The cofactor is Mg(2+). Requires Mn(2+) as cofactor. Ca(2+) serves as cofactor.

The protein resides in the nucleus. The catalysed reaction is ATP-dependent breakage, passage and rejoining of double-stranded DNA.. Control of topological states of DNA by transient breakage and subsequent rejoining of DNA strands. Topoisomerase II makes double-strand breaks. In Penicillium chrysogenum (Penicillium notatum), this protein is DNA topoisomerase 2 (TOP2).